A 126-amino-acid polypeptide reads, in one-letter code: Aspartate 1-decarboxylase (126 aa).

Serine 25 (schiff-base intermediate with substrate; via pyruvic acid) is an active-site residue. Serine 25 is modified (pyruvic acid (Ser)). Position 57 (threonine 57) interacts with substrate. The active-site Proton donor is the tyrosine 58. Residue 73 to 75 (GAA) coordinates substrate.

Belongs to the PanD family. As to quaternary structure, heterooctamer of four alpha and four beta subunits. The cofactor is pyruvate. In terms of processing, is synthesized initially as an inactive proenzyme, which is activated by self-cleavage at a specific serine bond to produce a beta-subunit with a hydroxyl group at its C-terminus and an alpha-subunit with a pyruvoyl group at its N-terminus.

The protein resides in the cytoplasm. It carries out the reaction L-aspartate + H(+) = beta-alanine + CO2. Its pathway is cofactor biosynthesis; (R)-pantothenate biosynthesis; beta-alanine from L-aspartate: step 1/1. Catalyzes the pyruvoyl-dependent decarboxylation of aspartate to produce beta-alanine. In Stutzerimonas stutzeri (strain A1501) (Pseudomonas stutzeri), this protein is Aspartate 1-decarboxylase.